The primary structure comprises 200 residues: Outer-membrane lipoprotein carrier protein (200 aa).

Residues 1-18 form the signal peptide; the sequence is MKAVVFAMVMAVSFNVFA.

The protein belongs to the LolA family. As to quaternary structure, monomer.

It localises to the periplasm. Participates in the translocation of lipoproteins from the inner membrane to the outer membrane. Only forms a complex with a lipoprotein if the residue after the N-terminal Cys is not an aspartate (The Asp acts as a targeting signal to indicate that the lipoprotein should stay in the inner membrane). The sequence is that of Outer-membrane lipoprotein carrier protein from Idiomarina loihiensis (strain ATCC BAA-735 / DSM 15497 / L2-TR).